The following is a 68-amino-acid chain: Large ribosomal subunit protein uL29 (68 aa).

Belongs to the universal ribosomal protein uL29 family.

The polypeptide is Large ribosomal subunit protein uL29 (Rhodospirillum rubrum (strain ATCC 11170 / ATH 1.1.1 / DSM 467 / LMG 4362 / NCIMB 8255 / S1)).